Reading from the N-terminus, the 172-residue chain is Protein GrpE (172 aa).

Positions 1–23 (MNQDHPEFDSEDLSQNPPETDPL) are disordered.

The protein belongs to the GrpE family. As to quaternary structure, homodimer.

The protein localises to the cytoplasm. Its function is as follows. Participates actively in the response to hyperosmotic and heat shock by preventing the aggregation of stress-denatured proteins, in association with DnaK and GrpE. It is the nucleotide exchange factor for DnaK and may function as a thermosensor. Unfolded proteins bind initially to DnaJ; upon interaction with the DnaJ-bound protein, DnaK hydrolyzes its bound ATP, resulting in the formation of a stable complex. GrpE releases ADP from DnaK; ATP binding to DnaK triggers the release of the substrate protein, thus completing the reaction cycle. Several rounds of ATP-dependent interactions between DnaJ, DnaK and GrpE are required for fully efficient folding. This is Protein GrpE from Xanthomonas axonopodis pv. citri (strain 306).